The following is a 60-amino-acid chain: Large ribosomal subunit protein bL32 (60 aa).

The disordered stretch occupies residues 1–60; that stretch reads MAVQQNKKSPSKRGMHRSHDFLVNPPTAIEPTTGESHLRHHISPNGFYRGRKILKTKADE. A compositionally biased stretch (basic residues) spans 49–60; it reads RGRKILKTKADE.

It belongs to the bacterial ribosomal protein bL32 family.

This chain is Large ribosomal subunit protein bL32, found in Bordetella avium (strain 197N).